Consider the following 108-residue polypeptide: Glutaredoxin-1 (108 aa).

Positions 3-106 (EEFVQQRLTN…DILSSIGVLR (104 aa)) constitute a Glutaredoxin domain. A disulfide bond links cysteine 23 and cysteine 26.

This sequence belongs to the glutaredoxin family.

It is found in the virion. Displays thioltransferase and dehydroascorbate reductase activities. This Variola virus (isolate Human/India/Ind3/1967) (VARV) protein is Glutaredoxin-1 (OPG075).